Here is a 128-residue protein sequence, read N- to C-terminus: Histone H2A type 1-H (128 aa).

The segment at 1–22 (MSGRGKQGGKARAKAKTRSSRA) is disordered. Residue Ser2 is modified to N-acetylserine. Ser2 carries the phosphoserine; by RPS6KA5 modification. A Citrulline; alternate modification is found at Arg4. Arg4 is subject to Symmetric dimethylarginine; by PRMT5; alternate. Lys6 bears the N6-(2-hydroxyisobutyryl)lysine mark. Residues 7–19 (QGGKARAKAKTRS) show a composition bias toward basic residues. At Lys10 the chain carries N6-(2-hydroxyisobutyryl)lysine; alternate. 2 positions are modified to N6-(beta-hydroxybutyryl)lysine; alternate: Lys10 and Lys14. Lys10 carries the N6-lactoyllysine; alternate modification. Lys10 is subject to N6-succinyllysine; alternate. Lys14 participates in a covalent cross-link: Glycyl lysine isopeptide (Lys-Gly) (interchain with G-Cter in ubiquitin); alternate. Residue Lys16 forms a Glycyl lysine isopeptide (Lys-Gly) (interchain with G-Cter in ubiquitin) linkage. Lys37 carries the N6-(2-hydroxyisobutyryl)lysine; alternate modification. An N6-(beta-hydroxybutyryl)lysine; alternate modification is found at Lys37. Lys37 carries the N6-crotonyllysine; alternate modification. Lys75 and Lys76 each carry N6-(2-hydroxyisobutyryl)lysine. Lys96 is modified (N6-(2-hydroxyisobutyryl)lysine; alternate). An N6-(beta-hydroxybutyryl)lysine; alternate modification is found at Lys96. Lys96 is subject to N6-succinyllysine; alternate. The residue at position 96 (Lys96) is an N6-glutaryllysine; alternate. Lys100 carries the post-translational modification N6-glutaryllysine. Residue Gln105 is modified to N5-methylglutamine. The residue at position 119 (Lys119) is an N6-(2-hydroxyisobutyryl)lysine; alternate. Residue Lys119 is modified to N6-(beta-hydroxybutyryl)lysine; alternate. N6-crotonyllysine; alternate is present on residues Lys119 and Lys120. An N6-glutaryllysine; alternate mark is found at Lys119 and Lys120. Lys120 is covalently cross-linked (Glycyl lysine isopeptide (Lys-Gly) (interchain with G-Cter in ubiquitin); alternate). Thr121 bears the Phosphothreonine; by DCAF1 mark. Lys126 is modified (N6-crotonyllysine; alternate). Position 126 is an N6-glutaryllysine; alternate (Lys126).

Belongs to the histone H2A family. As to quaternary structure, the nucleosome is a histone octamer containing two molecules each of H2A, H2B, H3 and H4 assembled in one H3-H4 heterotetramer and two H2A-H2B heterodimers. The octamer wraps approximately 147 bp of DNA. Post-translationally, deiminated on Arg-4 in granulocytes upon calcium entry. Monoubiquitination of Lys-120 (H2AK119Ub) by RING1, TRIM37 and RNF2/RING2 complex gives a specific tag for epigenetic transcriptional repression and participates in X chromosome inactivation of female mammals. It is involved in the initiation of both imprinted and random X inactivation. Ubiquitinated H2A is enriched in inactive X chromosome chromatin. Ubiquitination of H2A functions downstream of methylation of 'Lys-27' of histone H3 (H3K27me). H2AK119Ub by RNF2/RING2 can also be induced by ultraviolet and may be involved in DNA repair. Monoubiquitination of Lys-120 (H2AK119Ub) by TRIM37 may promote transformation of cells in a number of breast cancers. Following DNA double-strand breaks (DSBs), it is ubiquitinated through 'Lys-63' linkage of ubiquitin moieties by the E2 ligase UBE2N and the E3 ligases RNF8 and RNF168, leading to the recruitment of repair proteins to sites of DNA damage. Ubiquitination at Lys-14 and Lys-16 (H2AK13Ub and H2AK15Ub, respectively) in response to DNA damage is initiated by RNF168 that mediates monoubiquitination at these 2 sites, and 'Lys-63'-linked ubiquitin are then conjugated to monoubiquitin; RNF8 is able to extend 'Lys-63'-linked ubiquitin chains in vitro. Deubiquitinated by USP51 at Lys-14 and Lys-16 (H2AK13Ub and H2AK15Ub, respectively) after damaged DNA is repaired. H2AK119Ub and ionizing radiation-induced 'Lys-63'-linked ubiquitination (H2AK13Ub and H2AK15Ub) are distinct events. In terms of processing, phosphorylation on Ser-2 (H2AS1ph) is enhanced during mitosis. Phosphorylation on Ser-2 by RPS6KA5/MSK1 directly represses transcription. Acetylation of H3 inhibits Ser-2 phosphorylation by RPS6KA5/MSK1. Phosphorylation at Thr-121 (H2AT120ph) by DCAF1 is present in the regulatory region of many tumor suppresor genes and down-regulates their transcription. Post-translationally, glutamine methylation at Gln-105 (H2AQ104me) by FBL is specifically dedicated to polymerase I. It is present at 35S ribosomal DNA locus and impairs binding of the FACT complex. Symmetric dimethylation on Arg-4 by the PRDM1/PRMT5 complex may play a crucial role in the germ-cell lineage. In terms of processing, crotonylation (Kcr) is specifically present in male germ cells and marks testis-specific genes in post-meiotic cells, including X-linked genes that escape sex chromosome inactivation in haploid cells. Crotonylation marks active promoters and enhancers and confers resistance to transcriptional repressors. It is also associated with post-meiotically activated genes on autosomes. Post-translationally, lactylated in macrophages by EP300/P300 by using lactoyl-CoA directly derived from endogenous or exogenous lactate, leading to stimulates gene transcription.

It is found in the nucleus. It localises to the chromosome. Its function is as follows. Core component of nucleosome. Nucleosomes wrap and compact DNA into chromatin, limiting DNA accessibility to the cellular machineries which require DNA as a template. Histones thereby play a central role in transcription regulation, DNA repair, DNA replication and chromosomal stability. DNA accessibility is regulated via a complex set of post-translational modifications of histones, also called histone code, and nucleosome remodeling. In Homo sapiens (Human), this protein is Histone H2A type 1-H.